The chain runs to 317 residues: Melanocyte-stimulating hormone receptor (317 aa).

Over 1–37 (MPVQGSQRRLLGSLNSTPTATPHLGLAANQTGARCLE) the chain is Extracellular. Asn29 carries an N-linked (GlcNAc...) asparagine glycan. The helical transmembrane segment at 38–63 (VSIPDGLFLSLGLVSLVENVLVVTAI) threads the bilayer. Residues 64–72 (AKNRNLHSP) are Cytoplasmic-facing. Residues 73–93 (MYCFICCLALSDLLVSGSNML) traverse the membrane as a helical segment. Residues 94 to 118 (ETAVILLLEAGALAARAAVVQQLDN) lie on the Extracellular side of the membrane. The chain crosses the membrane as a helical span at residues 119 to 140 (VIDVITCSSMLASLCFLGAIAV). At 141-163 (DRYISIFYALRYHSIVTLPRARR) the chain is on the cytoplasmic side. The chain crosses the membrane as a helical span at residues 164–183 (AVAAIWVASVLFSMLFIAYY). The Extracellular segment spans residues 184–191 (DHAAVLLC). Residues 192-211 (LVVFFLAMLVLMAVLYIHML) traverse the membrane as a helical segment. Over 212 to 240 (ARARQHAQGIARLHKRQCPAHQGFGLKGA) the chain is Cytoplasmic. The helical transmembrane segment at 241 to 266 (ATLTILLGIFFLCWGPFFLHLTLIVL) threads the bilayer. At 267–279 (CPQHPTCSCIFKN) the chain is on the extracellular side. The chain crosses the membrane as a helical span at residues 280-300 (FNLFLALIICNAIIDPLIYAF). The Cytoplasmic segment spans residues 301–317 (RSQELRRTLKEVLLCSW). Cys315 carries S-palmitoyl cysteine lipidation.

The protein belongs to the G-protein coupled receptor 1 family. As to quaternary structure, interacts with MGRN1, but does not undergo MGRN1-mediated ubiquitination; this interaction competes with GNAS-binding and thus inhibits agonist-induced cAMP production. Interacts with OPN3; the interaction results in a decrease in MC1R-mediated cAMP signaling and ultimately a decrease in melanin production in melanocytes.

It is found in the cell membrane. Functionally, receptor for MSH (alpha, beta and gamma) and ACTH. The activity of this receptor is mediated by G proteins which activate adenylate cyclase. Mediates melanogenesis, the production of eumelanin (black/brown) and phaeomelanin (red/yellow), via regulation of cAMP signaling in melanocytes. The chain is Melanocyte-stimulating hormone receptor (MC1R) from Cercopithecus mitis (Blue monkey).